Reading from the N-terminus, the 365-residue chain is uncharacterized protein (365 aa).

29–36 (GPLNSGKS) lines the ATP pocket.

This sequence belongs to the archaeal ATPase family.

This is an uncharacterized protein from Methanocaldococcus jannaschii (strain ATCC 43067 / DSM 2661 / JAL-1 / JCM 10045 / NBRC 100440) (Methanococcus jannaschii).